Here is an 80-residue protein sequence, read N- to C-terminus: Cell division protein ZapB (80 aa).

Positions 3–80 (FEVLEQLESK…ALLGKMDEVE (78 aa)) form a coiled coil.

The protein belongs to the ZapB family. In terms of assembly, homodimer. The ends of the coiled-coil dimer bind to each other, forming polymers. Interacts with FtsZ.

It is found in the cytoplasm. Non-essential, abundant cell division factor that is required for proper Z-ring formation. It is recruited early to the divisome by direct interaction with FtsZ, stimulating Z-ring assembly and thereby promoting cell division earlier in the cell cycle. Its recruitment to the Z-ring requires functional FtsA or ZipA. In Vibrio parahaemolyticus serotype O3:K6 (strain RIMD 2210633), this protein is Cell division protein ZapB.